We begin with the raw amino-acid sequence, 375 residues long: Histidine biosynthesis bifunctional protein HisB (375 aa).

Residues 1 to 168 (MTPILFVDRD…GIAHELADAP (168 aa)) are histidinol-phosphatase. Asp-8 serves as the catalytic Nucleophile. Asp-8, Asp-10, and Asp-128 together coordinate Mg(2+). Asp-10 serves as the catalytic Proton donor. The imidazoleglycerol-phosphate dehydratase stretch occupies residues 169-375 (RRAVVQRNTK…SALPTTKGAL (207 aa)).

This sequence in the N-terminal section; belongs to the histidinol-phosphatase family. It in the C-terminal section; belongs to the imidazoleglycerol-phosphate dehydratase family. The cofactor is Mg(2+).

It localises to the cytoplasm. It carries out the reaction D-erythro-1-(imidazol-4-yl)glycerol 3-phosphate = 3-(imidazol-4-yl)-2-oxopropyl phosphate + H2O. The catalysed reaction is L-histidinol phosphate + H2O = L-histidinol + phosphate. Its pathway is amino-acid biosynthesis; L-histidine biosynthesis; L-histidine from 5-phospho-alpha-D-ribose 1-diphosphate: step 6/9. It functions in the pathway amino-acid biosynthesis; L-histidine biosynthesis; L-histidine from 5-phospho-alpha-D-ribose 1-diphosphate: step 8/9. This is Histidine biosynthesis bifunctional protein HisB from Xanthomonas oryzae pv. oryzae (strain MAFF 311018).